The chain runs to 1605 residues: Kinesin-like protein klp-12 (1605 aa).

A Kinesin motor domain is found at 5-358 (CVQVALRIRP…MKYANRAKEI (354 aa)). 84–91 (GQTGSGKT) contributes to the ATP binding site. Mg(2+)-binding residues include Thr-91 and Ser-217. 3 disordered regions span residues 548–596 (GENV…EESE), 1085–1152 (VSDA…SNNN), and 1198–1232 (SRSN…SSSK). Positions 550 to 559 (NVSSEYSSMA) are enriched in polar residues. Acidic residues predominate over residues 560-596 (QDEDGTSNEAEELLDEEDLDEDEDETAEEKQEQEESE). A coiled-coil region spans residues 575 to 730 (EEDLDEDEDE…KKAKVELIKK (156 aa)). Over residues 1116–1152 (VSTSPASTSFANSTSQSPSFSRNTRFRSTVGGVSNNN) the composition is skewed to polar residues. Low complexity predominate over residues 1200 to 1232 (SNLMSSSSSTTTTTLSSSNLLNPRGTTSSSSSK). WD repeat units lie at residues 1282–1319 (GHAR…EIRT), 1389–1427 (FLET…PLGR), 1525–1566 (AHQQ…RMKL), and 1573–1605 (AHQE…SNAV).

It belongs to the TRAFAC class myosin-kinesin ATPase superfamily. Kinesin family. In terms of assembly, component of a complex at least composed of alpha tubulin and beta tubulin. Within the complex, interacts with the alpha tubulin and beta tubulin dimer.

The protein localises to the cytoplasm. The protein resides in the cytoskeleton. Microtubule-binding motor protein which has ATPase activity. In complex with alpha and beta tubulins, preferentially binds to the growing microtubule plus-end to stabilize it and detaches following ATP hydrolysis. Negatively regulates axonal length through inhibiting microtubule polymerization at its plus-end. The protein is Kinesin-like protein klp-12 of Caenorhabditis elegans.